A 144-amino-acid polypeptide reads, in one-letter code: MNITTNGTTILTRSSIIIGVIILVASGLGPLHRSIHRGVEREVECLYRRLHNRILRLNHYVFLIYTVSLTKMVGTLAIAVRGHPGRRGHSDHLTRSIWIKTVRLVILDAIPTYRFCPVAPDLSLPALGASRRLPHFSHLHVHHD.

2 helical membrane passes run isoleucine 10–proline 30 and tyrosine 60–valine 80.

The protein resides in the membrane. This is an uncharacterized protein from Saccharomyces cerevisiae (strain ATCC 204508 / S288c) (Baker's yeast).